The chain runs to 510 residues: O-acetyltransferase pyr7 (510 aa).

This sequence belongs to the fumigaclavine B O-acetyltransferase family.

It functions in the pathway secondary metabolite biosynthesis; terpenoid biosynthesis. Its function is as follows. O-acetyltransferase; part of the gene cluster that mediates the biosynthesis of pyripyropene A, a specific human acyl-coenzyme A:cholesterol acyltransferase 2 inhibitor. The first step of the pathway is the synthesis of nicotinyl-CoA from nicotinic acid by the nicotinic acid-CoA ligase pyr1. Nicotinyl-CoA is then a substrate of polyketide synthase pyr2 to produce 4-hydroxy-6-(3-pyridinyl)-2H-pyran-2-one (HPPO) which is further prenylated by the polyprenyl transferase pyr6 to yield farnesyl-HPPO. The next steps consist of an epoxidation of farnesyl-HPPO to epoxyfarnesyl-HPPO by FAD-dependent monooxygenase pyr5 and a cyclization of the terpenoid portion by the terpene cyclase pyr4 to yield deacetyl-pyripyropene E. The 2 cytochrome P450 monooxygenases pyr3 and pyr9, and the 2 acetyltransferases pyr7 and pyr8 are involved in the conversion of deacetyl-pyripyropene E into pyripyropene A through several cycles of oxidation and acetylation steps. Pyr7 acetylates deacetyl-pyripyropene E to pyripyropene E which is oxidized to 11-deacetyl-pyripyropene O by pyr3, which is in turn acetylated into pyripyropene O by pyr8. Pyripyropene O is then oxidized to deacetyl-pyripyropene A by pyr9. Deacetyl-pyripyropene A is finally acetylated to pyripyropene A by pyr8. The sequence is that of O-acetyltransferase pyr7 from Aspergillus fumigatus (strain ATCC MYA-4609 / CBS 101355 / FGSC A1100 / Af293) (Neosartorya fumigata).